The chain runs to 135 residues: UPF0355 protein MRSA252 (135 aa).

Belongs to the UPF0355 family.

This Staphylococcus aureus (strain MRSA252) protein is UPF0355 protein MRSA252.